We begin with the raw amino-acid sequence, 1204 residues long: ATP-dependent helicase/nuclease subunit A (1204 aa).

The UvrD-like helicase ATP-binding domain maps to 2 to 469 (TKFTKEQNQA…IVLSDNFRST (468 aa)). 23-30 (ASAGSGKT) contributes to the ATP binding site. The UvrD-like helicase C-terminal domain occupies 496 to 784 (EGQLQFGATY…KLMTIHASKG (289 aa)).

The protein belongs to the helicase family. AddA subfamily. As to quaternary structure, heterodimer of AddA and AddB/RexB. Mg(2+) is required as a cofactor.

The catalysed reaction is Couples ATP hydrolysis with the unwinding of duplex DNA by translocating in the 3'-5' direction.. It catalyses the reaction ATP + H2O = ADP + phosphate + H(+). The heterodimer acts as both an ATP-dependent DNA helicase and an ATP-dependent, dual-direction single-stranded exonuclease. Recognizes the chi site generating a DNA molecule suitable for the initiation of homologous recombination. The AddA nuclease domain is required for chi fragment generation; this subunit has the helicase and 3' -&gt; 5' nuclease activities. This Lactobacillus johnsonii (strain CNCM I-12250 / La1 / NCC 533) protein is ATP-dependent helicase/nuclease subunit A.